The primary structure comprises 185 residues: HTH-type transcriptional regulator SAR2658 (185 aa).

The region spanning 6 to 66 (KENRQRIEEI…YVIQRDLDIF (61 aa)) is the HTH tetR-type domain. The segment at residues 29 to 48 (SMNRIAKELGIGMGTLYRHF) is a DNA-binding region (H-T-H motif).

This Staphylococcus aureus (strain MRSA252) protein is HTH-type transcriptional regulator SAR2658.